Consider the following 106-residue polypeptide: UPF0060 membrane protein Csal_2746 (106 aa).

The next 4 helical transmembrane spans lie at 6–26 (LLFI…WLWL), 31–51 (SPWL…LLSL), 59–79 (VYAA…WGVD), and 85–105 (PTDW…ASGW).

This sequence belongs to the UPF0060 family.

It is found in the cell inner membrane. The sequence is that of UPF0060 membrane protein Csal_2746 from Chromohalobacter salexigens (strain ATCC BAA-138 / DSM 3043 / CIP 106854 / NCIMB 13768 / 1H11).